The primary structure comprises 517 residues: Nuclear receptor subfamily 5 group A member 2 (517 aa).

Positions 43 to 118 form a DNA-binding region, nuclear receptor; the sequence is DEMCPVCGDK…VGMKLEAVRA (76 aa). Cys46, Cys49, Cys63, Cys66, Cys82, Cys88, Cys98, and Cys101 together coordinate Zn(2+). NR C4-type zinc fingers lie at residues 46-66 and 82-101; these read CPVCGDKVSGYHYGLLTCESC and CIENQSCQIDKTQRKRCPYC. Positions 112-127 are C-terminal extension (CTE); the sequence is KLEAVRADRMRGGRNK. The FTZ-F1 box signature appears at 128–147; the sequence is FGPMYKRDRALKQQKKALIR. The disordered stretch occupies residues 182–211; sequence GLPLSHHHHHHHHHHHHSSSSAGLPPADFD. The segment covering 186–199 has biased composition (basic residues); sequence SHHHHHHHHHHHHS. Positions 276 to 515 constitute an NR LBD domain; sequence SFPHLVVELL…NLLIEMLHAK (240 aa). Residues 397 to 400, Tyr492, and Lys496 contribute to the a phospholipid derivative site; that span reads GATL. Positions 504–515 are AF-2; the sequence is CNNLLIEMLHAK.

The protein belongs to the nuclear hormone receptor family. NR5 subfamily. Monomer; Binds DNA as a monomer.

The protein localises to the nucleus. It is found in the chromosome. Functionally, orphan nuclear receptor that binds DNA as a monomer to the 5'-TCAAGGCCA-3' sequence and controls expression of target genes: regulates key biological processes, such as cholesterol and bile acid synthesis pathways, as well as cartilage, liver and pancreas morphogenesis. Ligand-binding causes conformational change which causes recruitment of coactivators, promoting target gene activation. The specific ligand is unknown, but specific phospholipids, such as phosphatidylethanolamine, phosphatidylserine, dilauroyl phosphatidylcholine and diundecanoyl phosphatidylcholine can act as ligand in vitro. Acts as a pioneer transcription factor, which unwraps target DNA from histones and elicits local opening of closed chromatin. Involved in the formation of connective tissue in lower jaw. In terms of biological role, lacks transcription factor activity; unable to activate expression of target genes. The sequence is that of Nuclear receptor subfamily 5 group A member 2 from Danio rerio (Zebrafish).